A 496-amino-acid polypeptide reads, in one-letter code: GTPase Der (496 aa).

EngA-type G domains lie at 3 to 166 (PVVA…FDNL) and 208 to 381 (IKLA…RSAT). GTP is bound by residues 9–16 (GRPNVGKS), 56–60 (DTGGI), 118–121 (NKVD), 214–221 (GRPNVGKS), 261–265 (DTAGV), and 326–329 (NKWD). Residues 382-466 (TRVGTSVLTR…PIRIQFQNSD (85 aa)) form the KH-like domain.

Belongs to the TRAFAC class TrmE-Era-EngA-EngB-Septin-like GTPase superfamily. EngA (Der) GTPase family. As to quaternary structure, associates with the 50S ribosomal subunit.

Functionally, GTPase that plays an essential role in the late steps of ribosome biogenesis. The sequence is that of GTPase Der from Vibrio vulnificus (strain CMCP6).